The chain runs to 105 residues: uncharacterized protein (105 aa).

Residues 29–49 (NAFLLILSEAYLLFVFLSYLI) form a helical membrane-spanning segment.

The protein localises to the membrane. This is an uncharacterized protein from Saccharomyces cerevisiae (strain ATCC 204508 / S288c) (Baker's yeast).